We begin with the raw amino-acid sequence, 123 residues long: Small ribosomal subunit protein uS12 (123 aa).

Asp89 is modified (3-methylthioaspartic acid). The segment at 100–123 (GSLDTSGVKDRKQGRSKYGAKRPK) is disordered. Over residues 113–123 (GRSKYGAKRPK) the composition is skewed to basic residues.

This sequence belongs to the universal ribosomal protein uS12 family. Part of the 30S ribosomal subunit. Contacts proteins S8 and S17. May interact with IF1 in the 30S initiation complex.

In terms of biological role, with S4 and S5 plays an important role in translational accuracy. Functionally, interacts with and stabilizes bases of the 16S rRNA that are involved in tRNA selection in the A site and with the mRNA backbone. Located at the interface of the 30S and 50S subunits, it traverses the body of the 30S subunit contacting proteins on the other side and probably holding the rRNA structure together. The combined cluster of proteins S8, S12 and S17 appears to hold together the shoulder and platform of the 30S subunit. The protein is Small ribosomal subunit protein uS12 of Pseudomonas aeruginosa (strain LESB58).